The chain runs to 129 residues: Venom CUB domain-containing protein 1 (129 aa).

Residues 1–18 (MKLLGVLITIYCIASTLA) form the signal peptide. The region spanning 19 to 121 (IDVNVPSNGM…KASCKAYSIT (103 aa)) is the CUB domain. Cysteine 66 and cysteine 83 are disulfide-bonded.

This sequence belongs to the venom CUB family. In terms of processing, contains 2 disulfide bonds. Expressed by the venom gland.

It localises to the secreted. In Platymeris rhadamanthus (Red spot assassin bug), this protein is Venom CUB domain-containing protein 1.